Reading from the N-terminus, the 94-residue chain is Acylphosphatase (94 aa).

Residues 8 to 94 form the Acylphosphatase-like domain; the sequence is ALHVIVKGRV…RGYTDFRIEV (87 aa). Active-site residues include R23 and N41.

This sequence belongs to the acylphosphatase family.

It catalyses the reaction an acyl phosphate + H2O = a carboxylate + phosphate + H(+). The polypeptide is Acylphosphatase (acyP) (Treponema denticola (strain ATCC 35405 / DSM 14222 / CIP 103919 / JCM 8153 / KCTC 15104)).